Consider the following 399-residue polypeptide: S-adenosylmethionine synthase (399 aa).

Histidine 17 contacts ATP. Aspartate 19 is a Mg(2+) binding site. Glutamate 45 is a binding site for K(+). L-methionine is bound by residues glutamate 58 and glutamine 101. The tract at residues 101 to 111 (QSADIAMGVDQ) is flexible loop. ATP is bound by residues 177-179 (DGK), 244-245 (RF), aspartate 253, 259-260 (RK), alanine 276, and lysine 280. An L-methionine-binding site is contributed by aspartate 253. L-methionine is bound at residue lysine 284.

The protein belongs to the AdoMet synthase family. In terms of assembly, homotetramer; dimer of dimers. Requires Mg(2+) as cofactor. The cofactor is K(+).

It is found in the cytoplasm. It carries out the reaction L-methionine + ATP + H2O = S-adenosyl-L-methionine + phosphate + diphosphate. The protein operates within amino-acid biosynthesis; S-adenosyl-L-methionine biosynthesis; S-adenosyl-L-methionine from L-methionine: step 1/1. Its function is as follows. Catalyzes the formation of S-adenosylmethionine (AdoMet) from methionine and ATP. The overall synthetic reaction is composed of two sequential steps, AdoMet formation and the subsequent tripolyphosphate hydrolysis which occurs prior to release of AdoMet from the enzyme. This is S-adenosylmethionine synthase from Bacillus mycoides (strain KBAB4) (Bacillus weihenstephanensis).